The chain runs to 200 residues: Phosphatidylethanolamine N-methyltransferase B (200 aa).

Topologically, residues 1–8 are lumenal; that stretch reads MEKGLSSD. Positions 9–29 form an intramembrane region, helical; the sequence is LIIAFVAIVLHVVNYNVTAQF. The Lumenal portion of the chain corresponds to 30–39; it reads EYKTRYFTKL. Residues 40–58 traverse the membrane as a helical segment; it reads IGRNAIYYYAVFLIISALI. The Cytoplasmic portion of the chain corresponds to 59-86; sequence RDHFINVAVLSDKDSIILFPTEIANMIG. Residues 87–107 form a helical membrane-spanning segment; that stretch reads DSCFIFGILLNIWTLKALGIK. 91-93 is a binding site for S-adenosyl-L-methionine; sequence IFG. Residues 108-150 are Lumenal-facing; sequence GMYNGDSFGHIMDSPVTGGPYQFFSDPQYVGTTIAALGVAIRN. Residues 151 to 171 traverse the membrane as a helical segment; it reads QSIYGFLCTILVGVVFYISAT. Residues 172–200 are Cytoplasmic-facing; the sequence is FVETPHLKNIYSNRSYSKINFKNLKSLKN. 174-175 is an S-adenosyl-L-methionine binding site; sequence ET.

This sequence belongs to the class VI-like SAM-binding methyltransferase superfamily. PEMT/PEM2 methyltransferase family.

The protein resides in the endoplasmic reticulum membrane. Its subcellular location is the mitochondrion membrane. The catalysed reaction is a 1,2-diacyl-sn-glycero-3-phospho-N-methylethanolamine + S-adenosyl-L-methionine = a 1,2-diacyl-sn-glycero-3-phospho-N,N-dimethylethanolamine + S-adenosyl-L-homocysteine + H(+). It catalyses the reaction a 1,2-diacyl-sn-glycero-3-phospho-N,N-dimethylethanolamine + S-adenosyl-L-methionine = a 1,2-diacyl-sn-glycero-3-phosphocholine + S-adenosyl-L-homocysteine + H(+). It carries out the reaction a 1,2-diacyl-sn-glycero-3-phosphoethanolamine + S-adenosyl-L-methionine = a 1,2-diacyl-sn-glycero-3-phospho-N-methylethanolamine + S-adenosyl-L-homocysteine + H(+). Its pathway is phospholipid metabolism; phosphatidylcholine biosynthesis. Functionally, catalyzes the three sequential steps of the methylation pathway of phosphatidylcholine biosynthesis, the SAM-dependent methylation of phosphatidylethanolamine (PE) to phosphatidylmonomethylethanolamine (PMME), PMME to phosphatidyldimethylethanolamine (PDME), and PDME to phosphatidylcholine (PC). The protein is Phosphatidylethanolamine N-methyltransferase B (pemtB) of Dictyostelium discoideum (Social amoeba).